Consider the following 158-residue polypeptide: F(420)H(2) dehydrogenase subunit C (158 aa).

This sequence belongs to the complex I 30 kDa subunit family. As to quaternary structure, the FPO complex is composed of at least 13 different subunits.

It is found in the cell membrane. It carries out the reaction methanophenazine + reduced coenzyme F420-(gamma-L-Glu)(n) = dihydromethanophenazine + oxidized coenzyme F420-(gamma-L-Glu)(n) + H(+). In terms of biological role, component of the F(420)H(2) dehydrogenase (FPO complex) which is part of the energy-conserving F(420)H(2):heterodisulfide oxidoreductase system. The membrane-bound electron transfer system of the complex plays an important role in the metabolism of methylotrophic methanogens when the organisms grow on methanol or methylamines. Catalyzes the oxidation of methanophenazine to dihydromethanophenazine. It shuttles electrons from F(420)H(2), via FAD and iron-sulfur (Fe-S) centers, to methanophenazine (an electron carrier in the membrane). It couples the redox reaction to proton translocation (for every two electrons transferred, two hydrogen ions are translocated across the cytoplasmic membrane), and thus conserves the redox energy in a proton gradient. It also catalyzes the oxidation of F(420)H(2) with quinones such as 2,3-dimethyl-1,4-naphthoquinone, 2-methyl-1,4-naphthoquinone and tetramethyl-p-benzoquinone. This Methanosarcina mazei (strain ATCC BAA-159 / DSM 3647 / Goe1 / Go1 / JCM 11833 / OCM 88) (Methanosarcina frisia) protein is F(420)H(2) dehydrogenase subunit C (fpoC).